The primary structure comprises 521 residues: Hyccin (521 aa).

Thr306 bears the Phosphothreonine mark. At Ser321 the chain carries Phosphoserine. Residues 355 to 373 (AASSTSQSGLSNSSHNCSN) are compositionally biased toward low complexity. Residues 355–413 (AASSTSQSGLSNSSHNCSNKTSVGKNQRRSGGSKAGAKERETAGESCRDHFARKQTQRA) are disordered. Basic and acidic residues predominate over residues 390-406 (GAKERETAGESCRDHFA). Phosphoserine occurs at positions 415, 422, 433, 453, and 465.

Belongs to the Hyccin family. As to quaternary structure, component of a phosphatidylinositol 4-kinase (PI4K) complex, composed of PI4KA, EFR3 (EFR3A or EFR3B), TTC7 (TTC7A or TTC7B) and HYCC (HYCC1 or HYCC2). Interacts with TTC7 (TTC7A or TTC7B), interaction is direct. In terms of tissue distribution, predominantly expressed in the central nervous system, where it is found in neurons but not in myelinating cells. Lower abundance is observed in peripheral neurons, where it is detectable only at early postnatal ages. Expressed in both oligodendrocytes and neurons.

The protein localises to the cytoplasm. It is found in the cytosol. Its subcellular location is the cell membrane. Its function is as follows. Component of a complex required to localize phosphatidylinositol 4-kinase (PI4K) to the plasma membrane. The complex acts as a regulator of phosphatidylinositol 4-phosphate (PtdIns(4)P) synthesis. HYCC1 plays a key role in oligodendrocytes formation, a cell type with expanded plasma membrane that requires generation of PtdIns(4)P. Its role in oligodendrocytes formation probably explains its importance in myelination of the central and peripheral nervous system. May also have a role in the beta-catenin/Lef signaling pathway. The sequence is that of Hyccin (Hycc1) from Mus musculus (Mouse).